The primary structure comprises 298 residues: MLKIGSHVSMSGKKMLLAASEEAVSYGATTFMIYTGAPQNTRRKPIEELNIEAGRKHMELNGIEEIIVHAPYIINLGNTTKPETFQLGVDFLRMEIERTSALGVAKQIVLHPGAHVGAGADAGIQQIIKGLNEVLTPEQTVNIALETMAGKGTECGRSFEEIAKIIDGVKYNEKLSVCFDTCHTHDAGYDLVNDFDGVLNEFDKIVGINRLQVLHINDSKNVRGAGKDRHENIGFGHIGYKALHHIVHHPQLTHVPKILETPYVGEDKKDKKPPYKLEIEMLKNGTFDEGILEKIKAQ.

The Zn(2+) site is built by histidine 69, histidine 111, glutamate 146, aspartate 180, histidine 183, histidine 215, aspartate 228, histidine 230, and glutamate 260.

The protein belongs to the AP endonuclease 2 family. Requires Zn(2+) as cofactor.

The enzyme catalyses Endonucleolytic cleavage to 5'-phosphooligonucleotide end-products.. In terms of biological role, endonuclease IV plays a role in DNA repair. It cleaves phosphodiester bonds at apurinic or apyrimidinic (AP) sites, generating a 3'-hydroxyl group and a 5'-terminal sugar phosphate. The sequence is that of Probable endonuclease 4 from Bacillus mycoides (strain KBAB4) (Bacillus weihenstephanensis).